A 217-amino-acid chain; its full sequence is MSFISKIRCAFTLGQGVLIENEALKETNDPILFFNNWLKKAQDTGIILPESMSISTCTPEGRPSSRMVLLKEVDSKGFVFFTNYDSRKAHDLEANPFAALLFHWNILQRQVRIEGRVERISTAQSNAYFQSRGRGSRIGAWASHQSQELNDRQTLVERVKYFEEKFAGKEIPLPEFWGGYRVIPESIEFWQGKADRLHDRFVYQPTEKNWTVKRLNP.

Residues 66–71, 81–82, Arg87, Lys88, and Gln110 each bind FMN; these read RMVLLK and FT. Position 71 (Lys71) interacts with substrate. Substrate is bound by residues Tyr128, Arg132, and Ser136. Residues 145–146 and Trp190 contribute to the FMN site; that span reads QS. 196–198 provides a ligand contact to substrate; it reads RLH. Arg200 provides a ligand contact to FMN.

The protein belongs to the pyridoxamine 5'-phosphate oxidase family. Homodimer. FMN is required as a cofactor.

The catalysed reaction is pyridoxamine 5'-phosphate + O2 + H2O = pyridoxal 5'-phosphate + H2O2 + NH4(+). It carries out the reaction pyridoxine 5'-phosphate + O2 = pyridoxal 5'-phosphate + H2O2. Its pathway is cofactor metabolism; pyridoxal 5'-phosphate salvage; pyridoxal 5'-phosphate from pyridoxamine 5'-phosphate: step 1/1. It participates in cofactor metabolism; pyridoxal 5'-phosphate salvage; pyridoxal 5'-phosphate from pyridoxine 5'-phosphate: step 1/1. Its function is as follows. Catalyzes the oxidation of either pyridoxine 5'-phosphate (PNP) or pyridoxamine 5'-phosphate (PMP) into pyridoxal 5'-phosphate (PLP). The protein is Pyridoxine/pyridoxamine 5'-phosphate oxidase of Psychromonas ingrahamii (strain DSM 17664 / CCUG 51855 / 37).